The following is a 489-amino-acid chain: MSHLVQLIDGQWLAGEGKPFESMDPAKNEVIWQGGAASASQVDAAVKAARAAFYHWSDLALEDRLAIVRRYADLLGEHKEALALTIARETGKPLWETRTEVAAMQGKIAISIRAHDERTGTVENPMPGAKAFVRHKPHGVVAVFGPYNFPGHLPNGHIVPALIAGNTVVFKPSELTPMVAEAMLKIWQEAGLPKGVLNLVQGEVETGKALAGNPDIDGLFFTGSSRTGHFLHQQFAGQPGKILALEMGGNNPLIVKDVSDVDGAVHAIVQSAFITSGQRCTCSRRLFVERGARGDALVKRLVEVVGQIKVGLYDAADQPFMGAMISEKAALGMVAAQANLQQLGGESLLTLKHLEAGTGFVSPGIIDVTAIGALPDEEYFGPLLQLIRYDDFDAAIDQGNATSFGLSAGLLGDNEADWQHFFKRIRAGIVNWNKPITGASSAAPFGGIGASGNHRASAYYAADYCAYPVASVEDSKAAMPDQLSPGLTF.

Residue 223 to 228 coordinates NAD(+); it reads GSSRTG. Residues Glu246 and Cys280 contribute to the active site.

The protein belongs to the aldehyde dehydrogenase family. AstD subfamily.

It catalyses the reaction N-succinyl-L-glutamate 5-semialdehyde + NAD(+) + H2O = N-succinyl-L-glutamate + NADH + 2 H(+). It participates in amino-acid degradation; L-arginine degradation via AST pathway; L-glutamate and succinate from L-arginine: step 4/5. Catalyzes the NAD-dependent reduction of succinylglutamate semialdehyde into succinylglutamate. This chain is N-succinylglutamate 5-semialdehyde dehydrogenase, found in Aeromonas salmonicida (strain A449).